A 520-amino-acid chain; its full sequence is Leucine aminopeptidase 1 (520 aa).

The Mn(2+) site is built by lysine 288 and aspartate 293. Lysine 300 is an active-site residue. The Mn(2+) site is built by aspartate 313, aspartate 373, and glutamate 375. Residue arginine 377 is part of the active site.

Belongs to the peptidase M17 family. In terms of assembly, homohexamer (dimer of homotrimers). The cofactor is Mn(2+).

Its subcellular location is the cytoplasm. The enzyme catalyses Release of an N-terminal amino acid, Xaa-|-Yaa-, in which Xaa is preferably Leu, but may be other amino acids including Pro although not Arg or Lys, and Yaa may be Pro. Amino acid amides and methyl esters are also readily hydrolyzed, but rates on arylamides are exceedingly low.. The catalysed reaction is Release of N-terminal proline from a peptide.. Its function is as follows. Presumably involved in the processing and regular turnover of intracellular proteins. Catalyzes the removal of unsubstituted N-terminal amino acids from various peptides. Possesses leucine aminopeptidase activity against the model substrate leucine-amido methyl coumarin. Possesses Cys-Gly dipeptidase activity. In addition, can cleave Cys-Leu and Leu-Cys dipeptides. Functions as a molecular chaperone to protect proteins from heat-induced damage. In Arabidopsis thaliana (Mouse-ear cress), this protein is Leucine aminopeptidase 1.